Consider the following 890-residue polypeptide: DNA mismatch repair protein MutS (890 aa).

645–652 (GPNMAGKS) is a binding site for ATP.

It belongs to the DNA mismatch repair MutS family.

Its function is as follows. This protein is involved in the repair of mismatches in DNA. It is possible that it carries out the mismatch recognition step. This protein has a weak ATPase activity. The protein is DNA mismatch repair protein MutS of Rickettsia rickettsii (strain Iowa).